Here is a 326-residue protein sequence, read N- to C-terminus: NADH-quinone oxidoreductase subunit H (326 aa).

8 consecutive transmembrane segments (helical) span residues 11–31, 81–101, 114–134, 154–174, 186–206, 237–257, 265–285, and 302–322; these read ILLS…CGAF, VIFT…FAIV, IGIL…LFAG, LSYE…AGSF, LWNV…GVAV, FFVG…TLFF, LPPF…FILI, and WKVC…VILW.

This sequence belongs to the complex I subunit 1 family. As to quaternary structure, NDH-1 is composed of 13 different subunits. Subunits NuoA, H, J, K, L, M, N constitute the membrane sector of the complex.

Its subcellular location is the cell inner membrane. It carries out the reaction a quinone + NADH + 5 H(+)(in) = a quinol + NAD(+) + 4 H(+)(out). Functionally, NDH-1 shuttles electrons from NADH, via FMN and iron-sulfur (Fe-S) centers, to quinones in the respiratory chain. The immediate electron acceptor for the enzyme in this species is believed to be ubiquinone. Couples the redox reaction to proton translocation (for every two electrons transferred, four hydrogen ions are translocated across the cytoplasmic membrane), and thus conserves the redox energy in a proton gradient. This subunit may bind ubiquinone. This Cronobacter sakazakii (strain ATCC BAA-894) (Enterobacter sakazakii) protein is NADH-quinone oxidoreductase subunit H.